A 342-amino-acid polypeptide reads, in one-letter code: Dihydroorotase (342 aa).

Zn(2+) is bound by residues histidine 13 and histidine 15. Residues 15-17 (HLR) and asparagine 41 contribute to the substrate site. 3 residues coordinate Zn(2+): lysine 98, histidine 135, and histidine 173. The residue at position 98 (lysine 98) is an N6-carboxylysine. Histidine 135 contacts substrate. Leucine 218 is a binding site for substrate. Aspartate 246 contributes to the Zn(2+) binding site. Aspartate 246 is an active-site residue. The substrate site is built by histidine 250 and alanine 262.

It belongs to the metallo-dependent hydrolases superfamily. DHOase family. Class II DHOase subfamily. As to quaternary structure, homodimer. It depends on Zn(2+) as a cofactor.

The catalysed reaction is (S)-dihydroorotate + H2O = N-carbamoyl-L-aspartate + H(+). Its pathway is pyrimidine metabolism; UMP biosynthesis via de novo pathway; (S)-dihydroorotate from bicarbonate: step 3/3. Functionally, catalyzes the reversible cyclization of carbamoyl aspartate to dihydroorotate. The sequence is that of Dihydroorotase from Vibrio vulnificus (strain YJ016).